The chain runs to 194 residues: Putative 3-methyladenine DNA glycosylase (194 aa).

It belongs to the DNA glycosylase MPG family.

This is Putative 3-methyladenine DNA glycosylase from Aeropyrum pernix (strain ATCC 700893 / DSM 11879 / JCM 9820 / NBRC 100138 / K1).